Consider the following 955-residue polypeptide: B3 domain-containing protein Os07g0563300 (955 aa).

2 stretches are compositionally biased toward pro residues: residues 1–20 (MSSPAQPPPTRPPVAAPPPS) and 29–45 (VQPPPLQPKPPPHPQQP). 2 disordered regions span residues 1–81 (MSSP…QRPR) and 325–392 (ARKG…SSSL). A compositionally biased stretch (low complexity) spans 62 to 71 (QHQQQQQGPP). Polar residues predominate over residues 332 to 342 (DPCSSVSTTFK). Positions 343–355 (LDSHHPSILKDDP) are enriched in basic and acidic residues. The segment covering 382 to 392 (QQQQQMASSSL) has biased composition (low complexity). The segment at residues 453–554 (FEKMLSASDA…KLVMGFRKAT (102 aa)) is a DNA-binding region (TF-B3). Polar residues-rich tracts occupy residues 556–565 (LSAEQDQPTK) and 598–608 (NTESKSSSPVE). Residues 556–642 (LSAEQDQPTK…PLPVKRKATS (87 aa)) are disordered. The CW-type zinc finger occupies 708-758 (SGENHQWAQCEDCSKWRKLPVDALLPSKWTCSDNKWDSERSSCDSAQEINM). Residues Cys-717, Cys-720, Cys-738, and Cys-750 each coordinate Zn(2+). Positions 856 to 955 (MMRREKRQQS…ATRLLRDNPT (100 aa)) are disordered. Residues 862–877 (RQQSEKDSGVPRKREP) show a composition bias toward basic and acidic residues. 2 stretches are compositionally biased toward polar residues: residues 878–900 (GQSSEPVPQSGSGAHPTSTSSPH) and 920–933 (TSSPVKNQIDLNSQ). Positions 939 to 955 (EQSPKSDATRLLRDNPT) are enriched in basic and acidic residues.

The protein localises to the nucleus. This is B3 domain-containing protein Os07g0563300 from Oryza sativa subsp. japonica (Rice).